A 142-amino-acid polypeptide reads, in one-letter code: Ribonuclease VapC44 (142 aa).

One can recognise a PINc domain in the interval 4-126; that stretch reads LLDVNVLLAL…GRFVTFDQSI (123 aa). The Mg(2+) site is built by Asp-6 and Asp-105.

The protein belongs to the PINc/VapC protein family. Requires Mg(2+) as cofactor.

Functionally, toxic component of a type II toxin-antitoxin (TA) system. An RNase. Its cognate antitoxin is VapB44. The sequence is that of Ribonuclease VapC44 from Mycobacterium tuberculosis (strain CDC 1551 / Oshkosh).